Consider the following 496-residue polypeptide: Nucleolar and spindle-associated protein 1-B (496 aa).

3 disordered regions span residues 44–206, 250–294, and 338–496; these read YPES…HEAH, TPVS…STAN, and KSSS…VPVK. A compositionally biased stretch (polar residues) spans 56–69; the sequence is GCTSLTDTDELNSS. A compositionally biased stretch (basic and acidic residues) spans 121–134; sequence TQDKDCLESKKKEV. Residues 150-159 show a composition bias toward polar residues; the sequence is QDTSKQNNSE. The segment covering 261 to 281 has biased composition (low complexity); sequence SRLSLLSPLPRTTGASPSRTP. Polar residues-rich tracts occupy residues 376 to 396 and 403 to 423; these read NTTIQPSPAITESPCQQNKAN and AQNTETPNTNKKGSFDLQASL. The segment covering 447–459 has biased composition (low complexity); that stretch reads SGSNSNVSVLKNN. Basic and acidic residues predominate over residues 467 to 485; that stretch reads TREERRKQHELDRKGKRDQ.

The protein belongs to the NUSAP family. Interacts with DNA, microtubules, ipo7, kpna2 and kpnb1. Microtubule stabilization is inhibited by ipo7 and kpna2, while microtubule bundling is inhibited by kpnb1. Active GTP-bound ran causes dissociation of ipo7 and kpnb1.

The protein localises to the cytoplasm. The protein resides in the nucleus. It is found in the cytoskeleton. Its subcellular location is the spindle. Its function is as follows. Microtubule-associated protein with the capacity to bundle and stabilize microtubules. May associate with chromosomes and promote the organization of meiotic or mitotic spindle microtubules around them. The polypeptide is Nucleolar and spindle-associated protein 1-B (nusap1-b) (Xenopus laevis (African clawed frog)).